Consider the following 161-residue polypeptide: uncharacterized protein (161 aa).

This is an uncharacterized protein from Methanocaldococcus jannaschii (strain ATCC 43067 / DSM 2661 / JAL-1 / JCM 10045 / NBRC 100440) (Methanococcus jannaschii).